Consider the following 303-residue polypeptide: Lysosomal amino acid transporter 1 homolog (303 aa).

The Lumenal segment spans residues Met1 to Val38. The N-linked (GlcNAc...) asparagine glycan is linked to Asn13. The PQ-loop 1 domain maps to Arg36–Tyr102. The chain crosses the membrane as a helical span at residues Gly39 to Phe59. The Cytoplasmic segment spans residues Tyr60–Ser73. Residues Ile74–Ala94 traverse the membrane as a helical segment. Topologically, residues Asn95–Gln96 are lumenal. Residues Leu97–Leu117 form a helical membrane-spanning segment. The Cytoplasmic portion of the chain corresponds to Tyr118–Thr131. Residues Ala132–Leu152 form a helical membrane-spanning segment. At Ser153–Pro182 the chain is on the lumenal side. The helical transmembrane segment at Ile183–Cys203 threads the bilayer. Positions Thr186–Glu251 constitute a PQ-loop 2 domain. Residues Ser204 to Gly220 are Cytoplasmic-facing. The helical transmembrane segment at Val221 to Leu241 threads the bilayer. Over Leu242–Pro260 the chain is Lumenal. A helical transmembrane segment spans residues Trp261 to Ala281. The Cytoplasmic segment spans residues Tyr282 to Ser303. The Di-leucine motif signature appears at Leu296 to Leu297.

Belongs to the laat-1 family.

Its subcellular location is the lysosome membrane. Functionally, amino acid transporter that specifically mediates the pH-dependent export of the cationic amino acids arginine, histidine and lysine from lysosomes. This chain is Lysosomal amino acid transporter 1 homolog (SLC66A1), found in Gallus gallus (Chicken).